The following is a 430-amino-acid chain: Probable beta-1,3-galactosyl-O-glycosyl-glycoprotein beta-1,6-N-acetylglucosaminyltransferase 7 (430 aa).

At 1–8 (MSQLRATK) the chain is on the cytoplasmic side. The chain crosses the membrane as a helical; Signal-anchor for type II membrane protein span at residues 9–25 (SGLVVRAVICIFIFLYL). The Extracellular segment spans residues 26-430 (RNPTPAESEE…QSHFNMRLNR (405 aa)). Intrachain disulfides connect Cys53–Cys205, Cys139–Cys354, Cys160–Cys187, and Cys363–Cys395. N-linked (GlcNAc...) asparagine glycosylation is present at Asn87. A glycan (N-linked (GlcNAc...) asparagine) is linked at Asn272.

The protein belongs to the glycosyltransferase 14 family.

The protein resides in the golgi apparatus membrane. It functions in the pathway protein modification; protein glycosylation. In terms of biological role, probable glycosyltransferase. The polypeptide is Probable beta-1,3-galactosyl-O-glycosyl-glycoprotein beta-1,6-N-acetylglucosaminyltransferase 7 (Homo sapiens (Human)).